A 693-amino-acid polypeptide reads, in one-letter code: Elongation factor G (693 aa).

The region spanning Ala-8–Leu-282 is the tr-type G domain. Residues Ala-17 to Thr-24, Asp-81 to His-85, and Asn-135 to Asp-138 contribute to the GTP site.

This sequence belongs to the TRAFAC class translation factor GTPase superfamily. Classic translation factor GTPase family. EF-G/EF-2 subfamily.

The protein resides in the cytoplasm. In terms of biological role, catalyzes the GTP-dependent ribosomal translocation step during translation elongation. During this step, the ribosome changes from the pre-translocational (PRE) to the post-translocational (POST) state as the newly formed A-site-bound peptidyl-tRNA and P-site-bound deacylated tRNA move to the P and E sites, respectively. Catalyzes the coordinated movement of the two tRNA molecules, the mRNA and conformational changes in the ribosome. The protein is Elongation factor G of Streptococcus thermophilus (strain CNRZ 1066).